Reading from the N-terminus, the 568-residue chain is K(+) efflux antiporter 5 (568 aa).

The N-terminal stretch at 1–20 is a signal peptide; that stretch reads MARFAVIGLTFLLLLGTSLS. A disordered region spans residues 59–78; it reads EFSENDSPEGSDGASFNSSV. The next 12 helical transmembrane spans lie at 154 to 174, 178 to 198, 201 to 221, 230 to 250, 264 to 284, 298 to 318, 334 to 354, 389 to 409, 422 to 442, 447 to 467, 476 to 496, and 510 to 530; these read LISD…VFSC, PVIV…LKFI, MVQV…ALGL, VVGP…MFLC, GIFV…KFLV, IGIL…LPVL, LLLI…SFVP, LGLS…TTEF, NLFA…HFLW, ILLA…AVVV, ISFH…VLLS, and LLLL…FKLI.

The protein belongs to the monovalent cation:proton antiporter 2 (CPA2) transporter (TC 2.A.37) family. KEA (TC 2.A.37.1) subfamily. In terms of tissue distribution, expressed in roots, stems, leaves, flowers and silique.

The protein localises to the golgi apparatus membrane. It localises to the golgi apparatus. Its subcellular location is the trans-Golgi network membrane. It is found in the prevacuolar compartment membrane. The protein resides in the endomembrane system. The enzyme catalyses K(+)(in) + H(+)(out) = K(+)(out) + H(+)(in). Electroneutral K(+)/H(+) efflux antiporter involved in K(+) homeostasis and osmotic adjustment. Together with KEA4 and KEA6, promotes growth and development, and facilitates endosomal pH and ions homeostasis, as well as salt tolerance (e.g. K(+), NaCl and LiCl), probably by supporting cell wall biosynthesis during rapid etiolated seedling growth. This Arabidopsis thaliana (Mouse-ear cress) protein is K(+) efflux antiporter 5.